Here is a 350-residue protein sequence, read N- to C-terminus: 3-isopropylmalate dehydrogenase (350 aa).

An NAD(+)-binding site is contributed by 71–84; sequence GPKWADAPRHLRPE. Positions 91, 101, 129, and 220 each coordinate substrate. Residues Asp-220, Asp-244, and Asp-248 each coordinate Mg(2+). 279 to 291 contributes to the NAD(+) binding site; that stretch reads GSAPDIAGKGLAN.

Belongs to the isocitrate and isopropylmalate dehydrogenases family. LeuB type 1 subfamily. In terms of assembly, homodimer. Mg(2+) is required as a cofactor. Mn(2+) serves as cofactor.

It is found in the cytoplasm. It catalyses the reaction (2R,3S)-3-isopropylmalate + NAD(+) = 4-methyl-2-oxopentanoate + CO2 + NADH. It functions in the pathway amino-acid biosynthesis; L-leucine biosynthesis; L-leucine from 3-methyl-2-oxobutanoate: step 3/4. Catalyzes the oxidation of 3-carboxy-2-hydroxy-4-methylpentanoate (3-isopropylmalate) to 3-carboxy-4-methyl-2-oxopentanoate. The product decarboxylates to 4-methyl-2 oxopentanoate. The chain is 3-isopropylmalate dehydrogenase from Caulobacter vibrioides (strain ATCC 19089 / CIP 103742 / CB 15) (Caulobacter crescentus).